Here is a 275-residue protein sequence, read N- to C-terminus: Photosystem II extrinsic protein O (275 aa).

Residues 1-28 (MRFRTLLIAFLALCLGLITACSEGPANA) form the signal peptide.

It belongs to the PsbO family. PSII is composed of 1 copy each of membrane proteins PsbA, PsbB, PsbC, PsbD, PsbE, PsbF, PsbH, PsbI, PsbJ, PsbK, PsbL, PsbM, PsbT, PsbX, PsbY, PsbZ, Psb30/Ycf12, peripheral proteins PsbO, CyanoQ (PsbQ), PsbU, PsbV and a large number of cofactors. It forms dimeric complexes.

The protein resides in the cellular thylakoid membrane. Functionally, one of the extrinsic, lumenal subunits of photosystem II (PSII), which stabilize and protect the oxygen-evolving complex. PSII is a light-driven water plastoquinone oxidoreductase, using light energy to abstract electrons from H(2)O, generating a proton gradient subsequently used for ATP formation. Required for dimerization of PSII and for binding of PsbQ to PSII. This Crocosphaera subtropica (strain ATCC 51142 / BH68) (Cyanothece sp. (strain ATCC 51142)) protein is Photosystem II extrinsic protein O.